Here is a 274-residue protein sequence, read N- to C-terminus: Large ribosomal subunit protein uL2 (274 aa).

The disordered stretch occupies residues 223–274 (VAMNPVDHPHGGGEGRTSGGRHPVSPWGMPTKGFKTRKNKSTDKYIVRRRNK).

It belongs to the universal ribosomal protein uL2 family. In terms of assembly, part of the 50S ribosomal subunit. Forms a bridge to the 30S subunit in the 70S ribosome.

In terms of biological role, one of the primary rRNA binding proteins. Required for association of the 30S and 50S subunits to form the 70S ribosome, for tRNA binding and peptide bond formation. It has been suggested to have peptidyltransferase activity; this is somewhat controversial. Makes several contacts with the 16S rRNA in the 70S ribosome. The sequence is that of Large ribosomal subunit protein uL2 from Aliivibrio salmonicida (strain LFI1238) (Vibrio salmonicida (strain LFI1238)).